A 364-amino-acid polypeptide reads, in one-letter code: D-alanine--D-alanine ligase A (364 aa).

The region spanning 145–348 is the ATP-grasp domain; it reads KRLLRDAGLN…YTDLITRLIE (204 aa). ATP is bound at residue 175 to 230; that stretch reads ESKLGLPLFVKPANQGSSVGVSKVTSEEQYTIAVDLAFEFDHKVIVEQGIKGREIE. The Mg(2+) site is built by D302, E315, and N317.

It belongs to the D-alanine--D-alanine ligase family. Mg(2+) is required as a cofactor. Requires Mn(2+) as cofactor.

It localises to the cytoplasm. The catalysed reaction is 2 D-alanine + ATP = D-alanyl-D-alanine + ADP + phosphate + H(+). Its pathway is cell wall biogenesis; peptidoglycan biosynthesis. In terms of biological role, cell wall formation. The chain is D-alanine--D-alanine ligase A from Escherichia coli O6:H1 (strain CFT073 / ATCC 700928 / UPEC).